Consider the following 382-residue polypeptide: Mannitol-1-phosphate 5-dehydrogenase (382 aa).

3–14 (ALHFGAGNIGRG) contacts NAD(+). At K269 the chain carries N6-acetyllysine.

The protein belongs to the mannitol dehydrogenase family.

The catalysed reaction is D-mannitol 1-phosphate + NAD(+) = beta-D-fructose 6-phosphate + NADH + H(+). This chain is Mannitol-1-phosphate 5-dehydrogenase, found in Escherichia coli (strain ATCC 8739 / DSM 1576 / NBRC 3972 / NCIMB 8545 / WDCM 00012 / Crooks).